Reading from the N-terminus, the 514-residue chain is uncharacterized protein (514 aa).

The protein to E.coli YjjI.

This is an uncharacterized protein from Haemophilus influenzae (strain ATCC 51907 / DSM 11121 / KW20 / Rd).